Here is an 88-residue protein sequence, read N- to C-terminus: Cold-regulated protein BLT14 (88 aa).

The chain is Cold-regulated protein BLT14 (BLT14) from Hordeum vulgare (Barley).